Consider the following 360-residue polypeptide: GTPase Obg (360 aa).

The Obg domain maps to 1-156 (MFVDSVEIII…KCVRLELKLI (156 aa)). The region spanning 157 to 360 (ADIGLVGFPN…LKFVLLEALP (204 aa)) is the OBG-type G domain. Residues 163–170 (GFPNAGKS), 188–192 (FTTLV), 210–213 (DIPG), 279–282 (NKCD), and 341–343 (SAV) contribute to the GTP site. Positions 170 and 190 each coordinate Mg(2+).

It belongs to the TRAFAC class OBG-HflX-like GTPase superfamily. OBG GTPase family. In terms of assembly, monomer. Requires Mg(2+) as cofactor.

It localises to the cytoplasm. An essential GTPase which binds GTP, GDP and possibly (p)ppGpp with moderate affinity, with high nucleotide exchange rates and a fairly low GTP hydrolysis rate. Plays a role in control of the cell cycle, stress response, ribosome biogenesis and in those bacteria that undergo differentiation, in morphogenesis control. The protein is GTPase Obg of Helicobacter acinonychis (strain Sheeba).